The following is a 586-amino-acid chain: Axin-like protein pry-1 (586 aa).

The tract at residues 1-135 (METHLGWARS…FIEAFNKMSS (135 aa)) is required for interaction with apr-1. The 122-residue stretch at 10-131 (SLEAVLSDRS…GSEEFIEAFN (122 aa)) folds into the RGS domain. Disordered stretches follow at residues 137-168 (TADQ…KSAA), 344-442 (MTDD…DSFA), and 478-501 (TSSL…HSKI). 2 stretches are compositionally biased toward polar residues: residues 151 to 168 (HQNT…KSAA) and 368 to 388 (GEGS…QLHN). A compositionally biased stretch (low complexity) spans 421 to 442 (SQSMCAPSYSSASSSYSRDSFA). Residues 486 to 501 (RRQHRKAPTPKKHSKI) show a composition bias toward basic residues. The DIX domain occupies 505–586 (LSNLITISYL…FEGRIAAELR (82 aa)).

In terms of assembly, interacts (via N-terminus) with apr-1 (via C-terminus). Interacts with bar-1 (via ARM repeats), gsk-3, and mig-5. In terms of tissue distribution, expressed in hypodermal cells (seam cells) V5 and V6, Q neuroblasts, ventral hypodermal cells P7/8 to P11/12, body wall muscle cells and neurons in the head, the tail and the ventral nerve cord.

Its subcellular location is the cell membrane. The protein resides in the nucleus. It localises to the cytoplasm. It is found in the cell cortex. Functionally, works in parallel with axl-1 in negatively regulating bar-1 signaling in vulval precursor cells and Q neuroblasts. Inhibits Wnt signaling, which affects tissue specific expression of Hox genes, egl-5, lin-39 and mab-5. This in turn affects QR (postembryonic neuroblast) cell migration, vulval cell fate specification, and the development of sensory structures by the seam cell lineage. Has a role in alae V cell patterning, ray formation in the male tail and axon guidance. Does not affect B cell polarity. The protein is Axin-like protein pry-1 of Caenorhabditis elegans.